Reading from the N-terminus, the 696-residue chain is Elongation factor G (696 aa).

The 279-residue stretch at 8 to 286 (EDVRNIGIAA…AVVAYLPAPT (279 aa)) folds into the tr-type G domain. GTP contacts are provided by residues 17 to 24 (AHIDAGKT), 81 to 85 (DTPGH), and 135 to 138 (NKMD).

Belongs to the TRAFAC class translation factor GTPase superfamily. Classic translation factor GTPase family. EF-G/EF-2 subfamily.

The protein localises to the cytoplasm. Functionally, catalyzes the GTP-dependent ribosomal translocation step during translation elongation. During this step, the ribosome changes from the pre-translocational (PRE) to the post-translocational (POST) state as the newly formed A-site-bound peptidyl-tRNA and P-site-bound deacylated tRNA move to the P and E sites, respectively. Catalyzes the coordinated movement of the two tRNA molecules, the mRNA and conformational changes in the ribosome. This is Elongation factor G from Sulfurimonas denitrificans (strain ATCC 33889 / DSM 1251) (Thiomicrospira denitrificans (strain ATCC 33889 / DSM 1251)).